We begin with the raw amino-acid sequence, 95 residues long: Integration host factor subunit beta (95 aa).

Positions 56–95 (RAPRTGRNPKTGETVELDGKHVPHFKPGKELRDRVNESIA) are disordered. Positions 72-95 (LDGKHVPHFKPGKELRDRVNESIA) are enriched in basic and acidic residues.

Belongs to the bacterial histone-like protein family. As to quaternary structure, heterodimer of an alpha and a beta chain.

Its function is as follows. This protein is one of the two subunits of integration host factor, a specific DNA-binding protein that functions in genetic recombination as well as in transcriptional and translational control. This Pseudoalteromonas translucida (strain TAC 125) protein is Integration host factor subunit beta.